The chain runs to 134 residues: Small ribosomal subunit protein uS8 (134 aa).

It belongs to the universal ribosomal protein uS8 family. In terms of assembly, part of the 30S ribosomal subunit. Contacts proteins S5 and S12.

In terms of biological role, one of the primary rRNA binding proteins, it binds directly to 16S rRNA central domain where it helps coordinate assembly of the platform of the 30S subunit. This is Small ribosomal subunit protein uS8 from Kosmotoga olearia (strain ATCC BAA-1733 / DSM 21960 / TBF 19.5.1).